Here is a 416-residue protein sequence, read N- to C-terminus: Enterobactin exporter EntS (416 aa).

Over 1–21 (MNKQSWLLNLSLLKTHPAFRA) the chain is Cytoplasmic. A helical membrane pass occupies residues 22 to 42 (VFLARFISIVSLGLLGVAVPV). At 43–55 (QIQMMTHSTWQVG) the chain is on the periplasmic side. Residues 56–76 (LSVTLTGGAMFVGLMVGGVLA) traverse the membrane as a helical segment. Topologically, residues 77–83 (DRYERKK) are cytoplasmic. The helical transmembrane segment at 84 to 104 (VILLARGTCGIGFIGLCLNAL) threads the bilayer. The Periplasmic segment spans residues 105–109 (LPEPS). A helical membrane pass occupies residues 110–130 (LLAIYLLGLWDGFFASLGVTA). Over 131-156 (LLAATPALVGRENLMQAGAITMLTVR) the chain is Cytoplasmic. The chain crosses the membrane as a helical span at residues 157–177 (LGSVISPMIGGLLLATGGVAW). A topological domain (periplasmic) is located at residue Asn178. The helical transmembrane segment at 179–199 (YGLAAAGTFITLLPLLSLPAL) threads the bilayer. Residues 200-218 (PPPPQPREHPLKSLLAGFR) lie on the Cytoplasmic side of the membrane. Residues 219 to 239 (FLLASPLVGGIALLGGLLTMA) traverse the membrane as a helical segment. At 240-256 (SAVRVLYPALADNWQMS) the chain is on the periplasmic side. A helical membrane pass occupies residues 257–277 (AAQIGFLYAAIPLGAAIGALT). Topologically, residues 278-287 (SGKLAHSARP) are cytoplasmic. A helical membrane pass occupies residues 288–307 (GLLMLLSTLGSFLAIGLFGL). Residues 308-313 (MPMWIL) lie on the Periplasmic side of the membrane. A helical transmembrane segment spans residues 314–336 (GVVCLALFGWLSAVSSLLQYTML). The Cytoplasmic segment spans residues 337 to 356 (QTQTPEAMLGRINGLWTAQN). A helical membrane pass occupies residues 357–377 (VTGDAIGAALLGGLGAMMTPV). Residue Ala378 is a topological domain, periplasmic. Residues 379–399 (SASASGFGLLIIGVLLLLVLV) form a helical membrane-spanning segment. At 400–416 (ELRRFRQTPPQVTASDS) the chain is on the cytoplasmic side.

This sequence belongs to the major facilitator superfamily. EntS (TC 2.A.1.38) family.

It localises to the cell inner membrane. Its function is as follows. Component of an export pathway for enterobactin. This is Enterobactin exporter EntS from Escherichia coli (strain 55989 / EAEC).